The primary structure comprises 592 residues: Cryptochrome-2 (592 aa).

The 130-residue stretch at 21–150 folds into the Photolyase/cryptochrome alpha/beta domain; the sequence is ASSVHWFRKG…EVVTENSHTL (130 aa). A Glycyl lysine isopeptide (Lys-Gly) (interchain with G-Cter in ubiquitin) cross-link involves residue lysine 29. The residue at position 89 (serine 89) is a Phosphoserine. Residues lysine 125 and lysine 241 each participate in a glycyl lysine isopeptide (Lys-Gly) (interchain with G-Cter in ubiquitin) cross-link. Serine 265 bears the Phosphoserine; by MAPK mark. Residue serine 270 participates in FAD binding. At serine 298 the chain carries Phosphoserine. An FAD-binding site is contributed by glutamine 307. Lysine 347 is covalently cross-linked (Glycyl lysine isopeptide (Lys-Gly) (interchain with G-Cter in ubiquitin)). Residues histidine 373 and 405 to 407 each bind FAD; that span reads DAD. The segment at 389–488 is required for inhibition of CLOCK-BMAL1-mediated transcription; that stretch reads WVSWESGVRV…IIGVDYPRPI (100 aa). Glycyl lysine isopeptide (Lys-Gly) (interchain with G-Cter in ubiquitin) cross-links involve residues lysine 474 and lysine 503. A disordered region spans residues 532 to 592; that stretch reads VAEPGSSQAG…PTQEPASKDS (61 aa). Residues 536-547 show a composition bias toward polar residues; the sequence is GSSQAGSISNTG. Serine 553 is subject to Phosphoserine; by GSK3-beta. Serine 557 carries the phosphoserine; by DYRK1A and MAPK modification. Positions 582-592 are enriched in polar residues; the sequence is MPTQEPASKDS.

The protein belongs to the DNA photolyase class-1 family. As to quaternary structure, component of the circadian core oscillator, which includes the CRY proteins, CLOCK or NPAS2, BMAL1 or BMAL2, CSNK1D and/or CSNK1E, TIMELESS, and the PER proteins. Interacts with TIMELESS. Interacts directly with PER1, PER2 and PER3; interaction with PER2 inhibits its ubiquitination and vice versa. Interacts with CLOCK-BMAL1. Interacts with BMAL1. Interacts with CLOCK. Interacts with NFIL3. Interacts with FBXL3 and FBXL21. FBXL3, PER2 and the cofactor FAD compete for overlapping binding sites. FBXL3 cannot bind CRY2 that interacts already with PER2 or that contains bound FAD. Interacts with PPP5C (via TPR repeats); the interaction down-regulates the PPP5C phosphatase activity on CSNK1E. Interacts with nuclear receptors AR and NR3C1/GR; the interaction is ligand dependent. Interacts with PRKDC. Interacts with CIART. Interacts with DDB1, USP7 and TARDBP. Interacts with HNF4A. Interacts with PPARA. Interacts with PPARG in a ligand-dependent manner. Interacts with PPARD (via domain NR LBD) in a ligand-dependent manner. Interacts with NR1I2 (via domain NR LBD) in a ligand-dependent manner. Interacts with NR1I3 and VDR in a ligand-dependent manner. The cofactor is FAD. (6R)-5,10-methylene-5,6,7,8-tetrahydrofolate is required as a cofactor. Phosphorylation on Ser-265 by MAPK is important for the inhibition of CLOCK-BMAL1-mediated transcriptional activity. Phosphorylation by CSKNE requires interaction with PER1 or PER2. Phosphorylated in a circadian manner at Ser-553 and Ser-557 in the suprachiasmatic nucleus (SCN) and liver. Phosphorylation at Ser-557 by DYRK1A promotes subsequent phosphorylation at Ser-553 by GSK3-beta: the two-step phosphorylation at the neighboring Ser residues leads to its proteasomal degradation. In terms of processing, ubiquitinated by the SCF(FBXL3) and SCF(FBXL21) complexes, regulating the balance between degradation and stabilization. The SCF(FBXL3) complex is mainly nuclear and mediates ubiquitination and subsequent degradation of CRY2. In contrast, cytoplasmic SCF(FBXL21) complex-mediated ubiquitination leads to stabilize CRY2 and counteract the activity of the SCF(FBXL3) complex. The SCF(FBXL3) and SCF(FBXL21) complexes probably mediate ubiquitination at different Lys residues. The SCF(FBXL3) complex recognizes and binds CRY2 phosphorylated at Ser-553 and Ser-557. Ubiquitination may be inhibited by PER2. Deubiquitinated by USP7. Expression in the retina is restricted to the photoreceptor layer (at protein level). Expressed in all tissues examined including heart, brain, spleen, lung, liver, skeletal muscle, kidney and testis. Weak expression in spleen.

The protein localises to the cytoplasm. The protein resides in the nucleus. Its activity is regulated as follows. KL001 (N-[3-(9H-carbazol-9-yl)-2-hydroxypropyl]-N-(2-furanylmethyl)-methanesulfonamide) binds to CRY1 and stabilizes it by inhibiting FBXL3- and ubiquitin-dependent degradation of CRY1 resulting in lengthening of the circadian periods. KL001-mediated CRY1 stabilization can inhibit glucagon-induced gluconeogenesis in primary hepatocytes. In terms of biological role, transcriptional repressor which forms a core component of the circadian clock. The circadian clock, an internal time-keeping system, regulates various physiological processes through the generation of approximately 24 hour circadian rhythms in gene expression, which are translated into rhythms in metabolism and behavior. It is derived from the Latin roots 'circa' (about) and 'diem' (day) and acts as an important regulator of a wide array of physiological functions including metabolism, sleep, body temperature, blood pressure, endocrine, immune, cardiovascular, and renal function. Consists of two major components: the central clock, residing in the suprachiasmatic nucleus (SCN) of the brain, and the peripheral clocks that are present in nearly every tissue and organ system. Both the central and peripheral clocks can be reset by environmental cues, also known as Zeitgebers (German for 'timegivers'). The predominant Zeitgeber for the central clock is light, which is sensed by retina and signals directly to the SCN. The central clock entrains the peripheral clocks through neuronal and hormonal signals, body temperature and feeding-related cues, aligning all clocks with the external light/dark cycle. Circadian rhythms allow an organism to achieve temporal homeostasis with its environment at the molecular level by regulating gene expression to create a peak of protein expression once every 24 hours to control when a particular physiological process is most active with respect to the solar day. Transcription and translation of core clock components (CLOCK, NPAS2, BMAL1, BMAL2, PER1, PER2, PER3, CRY1 and CRY2) plays a critical role in rhythm generation, whereas delays imposed by post-translational modifications (PTMs) are important for determining the period (tau) of the rhythms (tau refers to the period of a rhythm and is the length, in time, of one complete cycle). A diurnal rhythm is synchronized with the day/night cycle, while the ultradian and infradian rhythms have a period shorter and longer than 24 hours, respectively. Disruptions in the circadian rhythms contribute to the pathology of cardiovascular diseases, cancer, metabolic syndromes and aging. A transcription/translation feedback loop (TTFL) forms the core of the molecular circadian clock mechanism. Transcription factors, CLOCK or NPAS2 and BMAL1 or BMAL2, form the positive limb of the feedback loop, act in the form of a heterodimer and activate the transcription of core clock genes and clock-controlled genes (involved in key metabolic processes), harboring E-box elements (5'-CACGTG-3') within their promoters. The core clock genes: PER1/2/3 and CRY1/2 which are transcriptional repressors form the negative limb of the feedback loop and interact with the CLOCK|NPAS2-BMAL1|BMAL2 heterodimer inhibiting its activity and thereby negatively regulating their own expression. This heterodimer also activates nuclear receptors NR1D1/2 and RORA/B/G, which form a second feedback loop and which activate and repress BMAL1 transcription, respectively. CRY1 and CRY2 have redundant functions but also differential and selective contributions at least in defining the pace of the SCN circadian clock and its circadian transcriptional outputs. Less potent transcriptional repressor in cerebellum and liver than CRY1, though less effective in lengthening the period of the SCN oscillator. Seems to play a critical role in tuning SCN circadian period by opposing the action of CRY1. With CRY1, dispensable for circadian rhythm generation but necessary for the development of intercellular networks for rhythm synchrony. May mediate circadian regulation of cAMP signaling and gluconeogenesis by blocking glucagon-mediated increases in intracellular cAMP concentrations and in CREB1 phosphorylation. Besides its role in the maintenance of the circadian clock, is also involved in the regulation of other processes. Plays a key role in glucose and lipid metabolism modulation, in part, through the transcriptional regulation of genes involved in these pathways, such as LEP or ACSL4. Represses glucocorticoid receptor NR3C1/GR-induced transcriptional activity by binding to glucocorticoid response elements (GREs). Represses the CLOCK-BMAL1 induced transcription of BHLHE40/DEC1 and NAMPT. Represses PPARD and its target genes in the skeletal muscle and limits exercise capacity. Represses the transcriptional activity of NR1I2. In Mus musculus (Mouse), this protein is Cryptochrome-2 (Cry2).